The following is a 290-amino-acid chain: Dual-specificity RNA pseudouridine synthase RluF (290 aa).

The S4 RNA-binding domain occupies 7–72 (VRLNKYISES…EAEDLVLIAL (66 aa)). Interaction with RNA regions lie at residues 105–108 (RLDK) and 187–190 (RQIR). The Nucleophile role is filled by aspartate 107. Positions 241-290 (SEAKPKAKAKPKTAGIKRPVVKMEKTAEKGGRPASNGKRFTSPGRKKKGR) are disordered. A compositionally biased stretch (basic and acidic residues) spans 261 to 271 (VKMEKTAEKGG).

The protein belongs to the pseudouridine synthase RsuA family. As to quaternary structure, monomer.

The catalysed reaction is uridine(2604) in 23S rRNA = pseudouridine(2604) in 23S rRNA. The enzyme catalyses uridine(35) in tRNA(Tyr) = pseudouridine(35) in tRNA(Tyr). Functionally, dual specificity enzyme that catalyzes the synthesis of pseudouridine from uracil-2604 in 23S ribosomal RNA and from uracil-35 in the anticodon of tRNA(Tyr). The chain is Dual-specificity RNA pseudouridine synthase RluF (rluF) from Shigella flexneri.